A 297-amino-acid chain; its full sequence is Ezy-1 protein (297 aa).

3 disordered regions span residues 1 to 34 (MAAVVGTGSDGGGDESGDRRTADAADADGDGDGG), 115 to 151 (FTGKAEPGAEGDDGEDEEEGEAQGVGKDAVDSSSSSS), and 255 to 297 (QPAG…SPNM). A compositionally biased stretch (acidic residues) spans 123–135 (AEGDDGEDEEEGE). The segment covering 136 to 150 (AQGVGKDAVDSSSSS) has biased composition (low complexity). Residues 259 to 269 (DGHEPEPKRPE) are compositionally biased toward basic and acidic residues.

The polypeptide is Ezy-1 protein (Ezy-1) (Chlamydomonas reinhardtii (Chlamydomonas smithii)).